The following is a 718-amino-acid chain: Threonine--tRNA ligase, mitochondrial (718 aa).

Ser52 is modified (phosphoserine). The TGS domain occupies Gln55 to Thr121.

It belongs to the class-II aminoacyl-tRNA synthetase family. As to quaternary structure, homodimer.

It localises to the mitochondrion matrix. It carries out the reaction tRNA(Thr) + L-threonine + ATP = L-threonyl-tRNA(Thr) + AMP + diphosphate + H(+). Its function is as follows. Catalyzes the attachment of threonine to tRNA(Thr) in a two-step reaction: threonine is first activated by ATP to form Thr-AMP and then transferred to the acceptor end of tRNA(Thr). Also edits incorrectly charged tRNA(Thr) via its editing domain. The protein is Threonine--tRNA ligase, mitochondrial (TARS2) of Homo sapiens (Human).